Consider the following 181-residue polypeptide: ABC transporter E family member 3 (181 aa).

Residues 20 to 176 enclose the ABC transporter domain; it reads SQIIVMLGEN…KAAFARFHNG (157 aa). Residue 27-34 coordinates ATP; it reads GENGTGKT.

Belongs to the ABC transporter superfamily. ABCE family. In terms of tissue distribution, mostly expressed in roots and leaves, and, to a lower extent, in stems, flowers and siliques.

The sequence is that of ABC transporter E family member 3 (ABCE3) from Arabidopsis thaliana (Mouse-ear cress).